Consider the following 73-residue polypeptide: Translation initiation factor IF-1 (73 aa).

One can recognise an S1-like domain in the interval 1 to 73 (MPKKEGVIEI…TRGRIVYRYK (73 aa)).

It belongs to the IF-1 family. Component of the 30S ribosomal translation pre-initiation complex which assembles on the 30S ribosome in the order IF-2 and IF-3, IF-1 and N-formylmethionyl-tRNA(fMet); mRNA recruitment can occur at any time during PIC assembly.

It localises to the cytoplasm. Its function is as follows. One of the essential components for the initiation of protein synthesis. Stabilizes the binding of IF-2 and IF-3 on the 30S subunit to which N-formylmethionyl-tRNA(fMet) subsequently binds. Helps modulate mRNA selection, yielding the 30S pre-initiation complex (PIC). Upon addition of the 50S ribosomal subunit IF-1, IF-2 and IF-3 are released leaving the mature 70S translation initiation complex. The sequence is that of Translation initiation factor IF-1 from Nocardioides sp. (strain ATCC BAA-499 / JS614).